The following is a 439-amino-acid chain: Transmembrane protease serine 11F (439 aa).

Residues 1-33 (MMYAPVEFSQTAYPRIEYQRRQQQFWDPIRLAL) are Cytoplasmic-facing. The helical; Signal-anchor for type II membrane protein transmembrane segment at 34-54 (FTLAIVAIVGITIGIVTHFVV) threads the bilayer. At 55-439 (EDDKSFYYLA…RDWIASKTGL (385 aa)) the chain is on the extracellular side. Residues 58-176 (KSFYYLASFQ…PSFSLTPIDS (119 aa)) form the SEA domain. Residues 207–438 (IVQGRETAME…YRDWIASKTG (232 aa)) enclose the Peptidase S1 domain. Cys-234 and Cys-250 are disulfide-bonded. Active-site charge relay system residues include His-249 and Asp-294. Cystine bridges form between Cys-359/Cys-375 and Cys-386/Cys-414. The active-site Charge relay system is Ser-390.

The protein belongs to the peptidase S1 family.

It localises to the membrane. Probable serine protease. This is Transmembrane protease serine 11F (Tmprss11f) from Mus musculus (Mouse).